The following is a 262-amino-acid chain: Putative dimethyl sulfoxide reductase iron-sulfur subunit B (262 aa).

3 4Fe-4S ferredoxin-type domains span residues 4-34, 62-93, and 94-123; these read YGLV…MGQF, LEMT…TRDD, and GIVE…FNWD. Residues C13, C16, C19, C23, C71, C74, C79, C83, C103, C106, C109, C113, C147, C150, C162, and C166 each contribute to the [4Fe-4S] cluster site. Positions 209–262 are disordered; that stretch reads NGEMSPGRPWKSKKLESELDDDEAAKAARRRSGSVENGYDVTPHVPAETAGGDD.

In terms of assembly, probable multiprotein complex that likely consists of DmsA, DmsB and DmsC. The cofactor is [4Fe-4S] cluster.

Its subcellular location is the cell membrane. Dimethyl sulfoxide (DMSO) reductase catalyzes the reduction of dimethyl sulfoxide (DMSO) to dimethyl sulfide (DMS) during anaerobic respiration; it can also use trimethylamine N-oxide (TMAO) as terminal electron acceptor. Subunit B is proposed to be involved in electron transfer. This is Putative dimethyl sulfoxide reductase iron-sulfur subunit B (dmsB) from Halobacterium salinarum (strain ATCC 700922 / JCM 11081 / NRC-1) (Halobacterium halobium).